Here is a 432-residue protein sequence, read N- to C-terminus: D-amino acid dehydrogenase (432 aa).

An FAD-binding site is contributed by 3–17; that stretch reads VVVLGSGVVGVASAW.

It belongs to the DadA oxidoreductase family. Requires FAD as cofactor.

The enzyme catalyses a D-alpha-amino acid + A + H2O = a 2-oxocarboxylate + AH2 + NH4(+). It participates in amino-acid degradation; D-alanine degradation; NH(3) and pyruvate from D-alanine: step 1/1. Oxidative deamination of D-amino acids. The chain is D-amino acid dehydrogenase from Cronobacter sakazakii (strain ATCC BAA-894) (Enterobacter sakazakii).